A 1210-amino-acid polypeptide reads, in one-letter code: MISFAPFLSPEAIKHLQENERYSDQSQKRTAQQIEAIYTSGQNILVSASAGSGKTFVMVERILDKILRGVSIDRLFISTFTVKAATELRERIENKLYSQIAQTTDFQMKVYLTEQLQSLCQADIGTMDAFAQKVVSRYGYSIGISSQFRIMQDKAEQDVLKQEVFSKLFSEFMNQKEAPVFRALVKNFSGNCKDTSAFRELVYTCYSFSQSTENPKIWLQENFLSAAKTYQRLEDIPDHDIELLLLAMQDTANQLRDVTDMEDYGQLTKAGSRSAKYTKHLTIIEKLSDWVRDFKCLYGKAGLDRLIRDVTDLIPSGNDVTVSKVKYPVFKTLHQKLKQFRHLETILMYQKDCFPLLEQLQDFVLVFSEAYLAVKIQESAFEFSDIAHFAIKILEENTDIRQSYQQHYHEVMVDEYQDNNHMQERLLTLLSNGHNRFMVGDIKQSIYRFRQADPQIFNQKFRDYQKKPEQGKVILLKENFRSQSEVLNVSNAVFSHLMDESVGDVSYDEQHQLIAGSHAQTVPYLDRRAQLLLYNSDKDDGNAPSDSEGISFSEVTIVAKEIIKLHNDKGVPFEDITLLVSSRTRNDIISHTFNQYGIPIVTDGGQQNYLKSVEVMVMLDTLRTINNPRNDYALVALLRSPMFAFDEDDLARIALQKDNELDKDCLYDKIQRAVIGRGAHPELIHDTLLGKLNVFLKTLKSWRRYAKLGSLYDLIWKIFNDRFYFDFVASQAKAEQAQANLYALALRANQFEKSGYKGLYRFIKMIDKVLETQNDLADVEVAAPKQAVNLMTIHKSKGLQFPYVFILNCDKRFSMTDIHKSFILNRQHGIGIKYLADIKGLLGETTLNSVKVSMETLPYQLNKQELRLATLSEQMRLLYVAMTRAEKKVYFIGKASKSKSQDITDPKKLGKLLPLALREQLLTFQDWLLAIADIFSTEDLYFDVRFIEDSDLTQESVGRLQTPQLLNPDDLKDNRQSETIARALDMLEAVSQLNANYEAAIHLPTVRTPSQLKATYEPLLEPIGVDIIEKSSRSLSDFTLPHFSKKAKVEASHIGSALHQLMQVLPLSKPINQQTLLDALRGIDSNEEVKTALDLKKIESFFCDTSLGQFFQTYQKHLYREAPFAILKLDPISQEEYVLRGIIDAYFLFDDHIVLVDYKTDKYKQPIELKKRYQQQLELYAEALTQTYKLPVTKRYLVLMGGGKPEIVEV.

The 457-residue stretch at 27 to 483 (QKRTAQQIEA…ILLKENFRSQ (457 aa)) folds into the UvrD-like helicase ATP-binding domain. Position 48 to 55 (48 to 55 (ASAGSGKT)) interacts with ATP. In terms of domain architecture, UvrD-like helicase C-terminal spans 512–798 (QLIAGSHAQT…NLMTIHKSKG (287 aa)).

It belongs to the helicase family. AddA subfamily. Heterodimer of AddA and AddB/RexB. Mg(2+) is required as a cofactor.

The catalysed reaction is Couples ATP hydrolysis with the unwinding of duplex DNA by translocating in the 3'-5' direction.. The enzyme catalyses ATP + H2O = ADP + phosphate + H(+). Its function is as follows. The heterodimer acts as both an ATP-dependent DNA helicase and an ATP-dependent, dual-direction single-stranded exonuclease. Recognizes the chi site generating a DNA molecule suitable for the initiation of homologous recombination. The AddA nuclease domain is required for chi fragment generation; this subunit has the helicase and 3' -&gt; 5' nuclease activities. The chain is ATP-dependent helicase/nuclease subunit A from Streptococcus pyogenes serotype M5 (strain Manfredo).